Consider the following 104-residue polypeptide: MMSNERTLLNQLIKSKTDTVGSEILKEIEGNDEYIKDVQLKKLKELHDKKFKEKGVTPLIRLYEKYNACALNDGDLQNWAELIDRDIRILEGTIKILEDESNEG.

Belongs to the BLOC1S1 family. As to quaternary structure, component of the biogenesis of lysosome-related organelles complex-1 (BLOC-1).

Its subcellular location is the endosome. Functionally, component of the biogenesis of lysosome-related organelles complex-1 (BLOC-1), a complex involved in endosomal cargo sorting. In Kluyveromyces lactis (strain ATCC 8585 / CBS 2359 / DSM 70799 / NBRC 1267 / NRRL Y-1140 / WM37) (Yeast), this protein is Biogenesis of lysosome-related organelles complex 1 subunit BLS1 (BLS1).